Reading from the N-terminus, the 353-residue chain is Putative glycosyltransferase TagX (353 aa).

Belongs to the glycosyltransferase 2 family.

The chain is Putative glycosyltransferase TagX (tagX) from Staphylococcus aureus (strain MSSA476).